A 479-amino-acid polypeptide reads, in one-letter code: Glutamate--tRNA ligase (479 aa).

The 'HIGH' region motif lies at 9-19; sequence PSPTGLFHIGT. The short motif at 248–252 is the 'KMSKS' region element; the sequence is KLSKR. Lys251 is an ATP binding site.

It belongs to the class-I aminoacyl-tRNA synthetase family. Glutamate--tRNA ligase type 1 subfamily. Monomer.

The protein resides in the cytoplasm. The enzyme catalyses tRNA(Glu) + L-glutamate + ATP = L-glutamyl-tRNA(Glu) + AMP + diphosphate. Functionally, catalyzes the attachment of glutamate to tRNA(Glu) in a two-step reaction: glutamate is first activated by ATP to form Glu-AMP and then transferred to the acceptor end of tRNA(Glu). The polypeptide is Glutamate--tRNA ligase (Prochlorococcus marinus (strain MIT 9312)).